A 185-amino-acid chain; its full sequence is Ribosome-recycling factor (185 aa).

This sequence belongs to the RRF family.

It localises to the cytoplasm. In terms of biological role, responsible for the release of ribosomes from messenger RNA at the termination of protein biosynthesis. May increase the efficiency of translation by recycling ribosomes from one round of translation to another. This chain is Ribosome-recycling factor, found in Buchnera aphidicola subsp. Schizaphis graminum (strain Sg).